A 208-amino-acid polypeptide reads, in one-letter code: Small ribosomal subunit protein uS4 (208 aa).

Residues 98 to 161 enclose the S4 RNA-binding domain; sequence RRLDNVVYRM…KSNPQVVRAM (64 aa).

This sequence belongs to the universal ribosomal protein uS4 family. Part of the 30S ribosomal subunit. Contacts protein S5. The interaction surface between S4 and S5 is involved in control of translational fidelity.

Its function is as follows. One of the primary rRNA binding proteins, it binds directly to 16S rRNA where it nucleates assembly of the body of the 30S subunit. With S5 and S12 plays an important role in translational accuracy. This chain is Small ribosomal subunit protein uS4, found in Helicobacter acinonychis (strain Sheeba).